The following is a 148-amino-acid chain: Probable glycine cleavage system H protein 2 (148 aa).

The region spanning 32–114 is the Lipoyl-binding domain; sequence TIVVGITDLA…YGKGWLVKMK (83 aa). Lysine 73 is subject to N6-lipoyllysine.

This sequence belongs to the GcvH family. As to quaternary structure, the glycine cleavage system is composed of four proteins: P, T, L and H. It depends on (R)-lipoate as a cofactor.

In terms of biological role, the glycine cleavage system catalyzes the degradation of glycine. The H protein shuttles the methylamine group of glycine from the P protein to the T protein. In Saccharolobus solfataricus (strain ATCC 35092 / DSM 1617 / JCM 11322 / P2) (Sulfolobus solfataricus), this protein is Probable glycine cleavage system H protein 2.